The sequence spans 360 residues: Probable neutral protease 2 homolog A (360 aa).

The first 17 residues, 1–17 (MQFTALLAALGAPLALA), serve as a signal peptide directing secretion. Residues 18–183 (ASIPAAAHNH…DDSTGVIDKR (166 aa)) constitute a propeptide that is removed on maturation. Cystine bridges form between Cys-191/Cys-262, Cys-269/Cys-287, and Cys-300/Cys-360. Residue Asn-205 is glycosylated (N-linked (GlcNAc...) asparagine). Residue His-311 coordinates Zn(2+). Residue Glu-312 is part of the active site. His-315 and Asp-326 together coordinate Zn(2+).

The protein belongs to the peptidase M35 family. The cofactor is Zn(2+).

The protein resides in the secreted. The catalysed reaction is Preferential cleavage of bonds with hydrophobic residues in P1'. Also 3-Asn-|-Gln-4 and 8-Gly-|-Ser-9 bonds in insulin B chain.. Its function is as follows. Probable secreted metalloprotease that shows high activities on basic nuclear substrates such as histone and protamine. May be involved in virulence. The polypeptide is Probable neutral protease 2 homolog A (NpII-A) (Trichophyton rubrum (Athlete's foot fungus)).